A 57-amino-acid chain; its full sequence is MAVPKKRTSMSKKHIRRNLWKKKGSLAAVKAFSLAQSISTGQSKSFFVAQKKVLEKS.

The protein belongs to the bacterial ribosomal protein bL32 family.

It localises to the plastid. Its subcellular location is the chloroplast. This is Large ribosomal subunit protein bL32c from Phalaenopsis aphrodite subsp. formosana (Moth orchid).